A 131-amino-acid polypeptide reads, in one-letter code: Profilin (131 aa).

Belongs to the profilin family. As to quaternary structure, occurs in many kinds of cells as a complex with monomeric actin in a 1:1 ratio.

It is found in the cytoplasm. It localises to the cytoskeleton. Its function is as follows. Binds to actin and affects the structure of the cytoskeleton. At high concentrations, profilin prevents the polymerization of actin, whereas it enhances it at low concentrations. By binding to PIP2, it inhibits the formation of IP3 and DG. The sequence is that of Profilin from Pyrus communis (Pear).